The following is a 608-amino-acid chain: Actin-related protein 8 (608 aa).

Residues 1–20 (MQRSRASSTSSGRLQASQQV) are disordered. 272-275 (DIGA) serves as a coordination point for ATP.

It belongs to the actin family. ARP8 subfamily. In terms of assembly, component of the chromatin remodeling Ino80 complex. Exists as monomers and dimers, but the dimer is most probably the biologically relevant form required for stable interactions with histones that exploits the twofold symmetry of the nucleosome core.

It localises to the nucleus. Its function is as follows. Plays an important role in the functional organization of mitotic chromosomes. Exhibits low basal ATPase activity, and unable to polymerize. Functionally, proposed core component of the chromatin remodeling INO80 complex which is involved in transcriptional regulation, DNA replication and probably DNA repair. Strongly prefer nucleosomes and H3-H4 tetramers over H2A-H2B dimers, suggesting it may act as a nucleosome recognition module within the complex. The chain is Actin-related protein 8 from Drosophila pseudoobscura pseudoobscura (Fruit fly).